A 120-amino-acid chain; its full sequence is Cytochrome b5 (120 aa).

The region spanning 2 to 78 (PKVYSYQEVA…LKGLYIGDVD (77 aa)) is the Cytochrome b5 heme-binding domain. Histidine 37 and histidine 61 together coordinate heme. A helical membrane pass occupies residues 98–118 (GSGTLVVILAILMLGVAYYLL).

Belongs to the cytochrome b5 family.

Its subcellular location is the endoplasmic reticulum membrane. It localises to the microsome membrane. In terms of biological role, membrane bound hemoprotein which function as an electron carrier for several membrane bound oxygenases. It plays a role in fatty-acid desaturation and is also involved in several steps of the sterol biosynthesis pathway, particularly in the 4-demethylation of the 4,4'-dimethyl zymosterol. In Saccharomyces cerevisiae (strain ATCC 204508 / S288c) (Baker's yeast), this protein is Cytochrome b5 (CYB5).